A 260-amino-acid polypeptide reads, in one-letter code: Snake venom serine proteinase 4a (260 aa).

Positions 1–18 (MVLIRVLANLLILQLSYA) are cleaved as a signal peptide. Positions 19-24 (QMSSEL) are excised as a propeptide. In terms of domain architecture, Peptidase S1 spans 25–251 (VTGGDECNRN…HLDWIQRIIA (227 aa)). 6 cysteine pairs are disulfide-bonded: C31-C163, C50-C66, C98-C258, C142-C212, C174-C191, and C202-C227. The active-site Charge relay system is the H65. The N-linked (GlcNAc...) asparagine glycan is linked to N103. D110 (charge relay system) is an active-site residue. S206 acts as the Charge relay system in catalysis.

Belongs to the peptidase S1 family. Snake venom subfamily. As to quaternary structure, monomer. In terms of tissue distribution, expressed by the venom gland.

The protein resides in the secreted. In terms of biological role, snake venom serine protease that may act in the hemostasis system of the prey. The protein is Snake venom serine proteinase 4a of Crotalus adamanteus (Eastern diamondback rattlesnake).